Here is a 312-residue protein sequence, read N- to C-terminus: Polyhedral envelope protein (312 aa).

It belongs to the baculoviridae PE family.

Its subcellular location is the virion membrane. In terms of biological role, major component of the polyhedra envelope. The polypeptide is Polyhedral envelope protein (Lymantria dispar multicapsid nuclear polyhedrosis virus (LdMNPV)).